Consider the following 418-residue polypeptide: Gamma-glutamyl phosphate reductase (418 aa).

This sequence belongs to the gamma-glutamyl phosphate reductase family.

The protein resides in the cytoplasm. It catalyses the reaction L-glutamate 5-semialdehyde + phosphate + NADP(+) = L-glutamyl 5-phosphate + NADPH + H(+). It participates in amino-acid biosynthesis; L-proline biosynthesis; L-glutamate 5-semialdehyde from L-glutamate: step 2/2. Functionally, catalyzes the NADPH-dependent reduction of L-glutamate 5-phosphate into L-glutamate 5-semialdehyde and phosphate. The product spontaneously undergoes cyclization to form 1-pyrroline-5-carboxylate. In Lacticaseibacillus casei (strain BL23) (Lactobacillus casei), this protein is Gamma-glutamyl phosphate reductase.